The following is a 422-amino-acid chain: uncharacterized protein (422 aa).

The next 12 membrane-spanning stretches (helical) occupy residues 23 to 43 (IVKI…LIYD), 47 to 67 (AIGT…LAPV), 90 to 110 (AIVL…WFVM), 112 to 132 (LMIV…ALIP), 151 to 171 (AQIV…FISP), 172 to 192 (SYTM…VLFI), 228 to 248 (ILYP…PWEA), 263 to 283 (IVYS…GFVL), 291 to 308 (YGLL…AFFI), 318 to 340 (VFFA…YTII), 352 to 372 (VYAV…VICG), and 381 to 401 (GKVI…ILLF).

Belongs to the major facilitator superfamily.

It localises to the cell membrane. This is an uncharacterized protein from Bacillus subtilis (strain 168).